Reading from the N-terminus, the 540-residue chain is Type II methyltransferase M.AccI (540 aa).

Belongs to the N(4)/N(6)-methyltransferase family. Monomer.

The catalysed reaction is a 2'-deoxyadenosine in DNA + S-adenosyl-L-methionine = an N(6)-methyl-2'-deoxyadenosine in DNA + S-adenosyl-L-homocysteine + H(+). Functionally, a gamma subtype methylase, recognizes the double-stranded sequence 5'-GTMKAC-3', methylates A-5 on both strands, and protects the DNA from cleavage by the AccI endonuclease. This chain is Type II methyltransferase M.AccI (accIM), found in Acinetobacter calcoaceticus.